The chain runs to 65 residues: Large ribosomal subunit protein bL35 (65 aa).

Belongs to the bacterial ribosomal protein bL35 family.

This Baumannia cicadellinicola subsp. Homalodisca coagulata protein is Large ribosomal subunit protein bL35.